The following is a 102-amino-acid chain: Small ribosomal subunit protein uS10 (102 aa).

The protein belongs to the universal ribosomal protein uS10 family. In terms of assembly, part of the 30S ribosomal subunit.

Its function is as follows. Involved in the binding of tRNA to the ribosomes. The protein is Small ribosomal subunit protein uS10 of Streptococcus sanguinis (strain SK36).